A 227-amino-acid chain; its full sequence is Heptaprenylglyceryl phosphate synthase (227 aa).

K13 serves as a coordination point for sn-glycerol 1-phosphate. Mg(2+)-binding residues include D15 and T41. Residues 159–164 (YLEYSG), G189, and 209–210 (GN) each bind sn-glycerol 1-phosphate.

This sequence belongs to the GGGP/HepGP synthase family. Group I subfamily. As to quaternary structure, homodimer. The cofactor is Mg(2+).

The catalysed reaction is sn-glycerol 1-phosphate + all-trans-heptaprenyl diphosphate = 3-heptaprenyl-sn-glycero-1-phosphate + diphosphate. Its pathway is membrane lipid metabolism; glycerophospholipid metabolism. Its function is as follows. Prenyltransferase that catalyzes in vivo the transfer of the heptaprenyl moiety of heptaprenyl pyrophosphate (HepPP; 35 carbon atoms) to the C3 hydroxyl of sn-glycerol-1-phosphate (G1P), producing heptaprenylglyceryl phosphate (HepGP). This reaction is an ether-bond-formation step in the biosynthesis of archaea-type G1P-based membrane lipids found in Bacillales. This chain is Heptaprenylglyceryl phosphate synthase, found in Exiguobacterium sibiricum (strain DSM 17290 / CCUG 55495 / CIP 109462 / JCM 13490 / 255-15).